Here is a 134-residue protein sequence, read N- to C-terminus: Arsenate reductase (134 aa).

Residues Cys11, Cys83, and Cys90 each act as nucleophile in the active site. Disulfide bonds link Cys11–Cys83 and Cys83–Cys90.

Belongs to the low molecular weight phosphotyrosine protein phosphatase family. Thioredoxin-coupled ArsC subfamily.

It is found in the cytoplasm. The catalysed reaction is arsenate + [thioredoxin]-dithiol + H(+) = arsenite + [thioredoxin]-disulfide + H2O. Catalyzes the reduction of arsenate [As(V)] to arsenite [As(III)]. This chain is Arsenate reductase, found in Bacillus cereus (strain 03BB102).